The primary structure comprises 567 residues: Thiol:disulfide interchange protein DsbD (567 aa).

The signal sequence occupies residues 1–19; that stretch reads MAQRIFTLILLLCSTSAFA. 2 disulfides stabilise this stretch: Cys122–Cys128 and Cys185–Cys307. Helical transmembrane passes span 170-192, 212-234, 246-268, 297-319, 326-348, 358-380, and 387-409; these read ALWALLIGIGIAFTPCVLPMYPL, LAFIYVQGMALTYTALGLVVAAA, YVLIGLAIVFTLLALSMFGLFTL, GAIAGLICSPCTTAPLSAILLYI, WLGGGTLYLYALGMGLPLMLVTV, GPWMAHVKTAFGFVILALPVFLL, and AWGLRLWSLLGVAFFGWAFITSL. A Thioredoxin domain is found at 435 to 567; it reads QDWAFGSPSA…FSAHLHDRQP (133 aa). The cysteines at positions 482 and 485 are disulfide-linked.

It belongs to the thioredoxin family. DsbD subfamily.

The protein resides in the cell inner membrane. The catalysed reaction is [protein]-dithiol + NAD(+) = [protein]-disulfide + NADH + H(+). It carries out the reaction [protein]-dithiol + NADP(+) = [protein]-disulfide + NADPH + H(+). Functionally, required to facilitate the formation of correct disulfide bonds in some periplasmic proteins and for the assembly of the periplasmic c-type cytochromes. Acts by transferring electrons from cytoplasmic thioredoxin to the periplasm. This transfer involves a cascade of disulfide bond formation and reduction steps. The polypeptide is Thiol:disulfide interchange protein DsbD (Salmonella typhi).